Consider the following 203-residue polypeptide: Large ribosomal subunit protein bL25 (203 aa).

The protein belongs to the bacterial ribosomal protein bL25 family. CTC subfamily. In terms of assembly, part of the 50S ribosomal subunit; part of the 5S rRNA/L5/L18/L25 subcomplex. Contacts the 5S rRNA. Binds to the 5S rRNA independently of L5 and L18.

Functionally, this is one of the proteins that binds to the 5S RNA in the ribosome where it forms part of the central protuberance. This Pseudomonas savastanoi pv. phaseolicola (strain 1448A / Race 6) (Pseudomonas syringae pv. phaseolicola (strain 1448A / Race 6)) protein is Large ribosomal subunit protein bL25.